The sequence spans 230 residues: Phosphoribosylaminoimidazole-succinocarboxamide synthase (230 aa).

The protein belongs to the SAICAR synthetase family.

The enzyme catalyses 5-amino-1-(5-phospho-D-ribosyl)imidazole-4-carboxylate + L-aspartate + ATP = (2S)-2-[5-amino-1-(5-phospho-beta-D-ribosyl)imidazole-4-carboxamido]succinate + ADP + phosphate + 2 H(+). It participates in purine metabolism; IMP biosynthesis via de novo pathway; 5-amino-1-(5-phospho-D-ribosyl)imidazole-4-carboxamide from 5-amino-1-(5-phospho-D-ribosyl)imidazole-4-carboxylate: step 1/2. This is Phosphoribosylaminoimidazole-succinocarboxamide synthase from Thermotoga sp. (strain RQ2).